A 925-amino-acid polypeptide reads, in one-letter code: Coronin-7 (925 aa).

4 WD repeats span residues 75-115 (CHSD…QALP), 124-163 (PEDL…PLTE), 166-205 (AHGD…QASQ), and 209-253 (AHEN…SALA). Disordered regions lie at residues 196–216 (DPRT…SRDS) and 399–465 (LVPP…SLQS). Positions 201–210 (PQASQSTQAH) are enriched in polar residues. Residues 429-460 (SSPPSSLTSPSTPSSLGPTLSSTSGIGTGPSL) are compositionally biased toward low complexity. Phosphoserine is present on residues Ser462 and Ser465. Lys472 is covalently cross-linked (Glycyl lysine isopeptide (Lys-Gly) (interchain with G-Cter in ubiquitin)). 3 WD repeats span residues 542–582 (QNGA…LEEV), 592–632 (GHME…DRLK), and 635–674 (GHQD…EPLQ). Lys680 participates in a covalent cross-link: Glycyl lysine isopeptide (Lys-Gly) (interchain with G-Cter in ubiquitin). One copy of the WD 8 repeat lies at 728-768 (DVAPSTLVPSYEPRHWPGAPDWQGDARVFLYELLPESPFFM). A disordered region spans residues 857–925 (LQPPDMSPVS…FEGVDEDEWD (69 aa)). The span at 866–882 (SQAPREAPARRAPSSAQ) shows a compositional bias: low complexity. The segment covering 884-896 (LEEKSDQQKKEEL) has biased composition (basic and acidic residues). Phosphoserine is present on Ser915.

This sequence belongs to the WD repeat coronin family. As to quaternary structure, interacts with clathrin adapter AP1 complex. This interaction takes place at Golgi membranes and not AP1-positive endosomal membranes. Interacts (when ubiquitinated at Lys-472) with EPS15. In terms of processing, the membrane-associated form is phosphorylated on tyrosine residues. Post-translationally, ubiquitinated via 'Lys-33'-linked ubiquitin chains by the BCR(KLHL20) E3 ubiquitin ligase complex: 'Lys-33'-linked ubiquitination promotes interaction with EPS15 and facilitates actin polymerization at the trans-Golgi network, thereby facilitating post-Golgi trafficking. Deubiquitinated by ZRANB1/TRABID.

The protein resides in the golgi apparatus membrane. Its subcellular location is the golgi apparatus. The protein localises to the trans-Golgi network. It is found in the cytoplasmic vesicle. It localises to the cytoplasm. The protein resides in the cytosol. F-actin regulator involved in anterograde Golgi to endosome transport: upon ubiquitination via 'Lys-33'-linked ubiquitin chains by the BCR(KLHL20) E3 ubiquitin ligase complex, interacts with EPS15 and localizes to the trans-Golgi network, where it promotes actin polymerization, thereby facilitating post-Golgi trafficking. May play a role in the maintenance of the Golgi apparatus morphology. The polypeptide is Coronin-7 (CORO7) (Pongo abelii (Sumatran orangutan)).